We begin with the raw amino-acid sequence, 127 residues long: Holo-[acyl-carrier-protein] synthase (127 aa).

Asp-8 and Glu-56 together coordinate Mg(2+).

This sequence belongs to the P-Pant transferase superfamily. AcpS family. Mg(2+) serves as cofactor.

It localises to the cytoplasm. The catalysed reaction is apo-[ACP] + CoA = holo-[ACP] + adenosine 3',5'-bisphosphate + H(+). Functionally, transfers the 4'-phosphopantetheine moiety from coenzyme A to a Ser of acyl-carrier-protein. The sequence is that of Holo-[acyl-carrier-protein] synthase from Deinococcus deserti (strain DSM 17065 / CIP 109153 / LMG 22923 / VCD115).